Reading from the N-terminus, the 167-residue chain is cAMP-dependent protein kinase type I-alpha regulatory subunit (167 aa).

Threonine 12 carries the post-translational modification Phosphothreonine. Residues serine 14 and serine 20 each carry the phosphoserine modification. The short motif at 30-33 is the Pseudophosphorylation motif element; the sequence is RGAI. Serine 34 carries the post-translational modification Phosphoserine. Residues 51–78, 79–167, glutamate 147, and arginine 156 each bind 3',5'-cyclic AMP; these read LFSHLDDNERILMGSTLRMYEEFLSKVS and ILES…ILKR. Serine 82 is subject to Phosphoserine.

It belongs to the cAMP-dependent kinase regulatory chain family. In terms of assembly, the inactive holoenzyme is composed of two regulatory chains and two catalytic chains. Activation by cAMP releases the two active catalytic monomers and the regulatory dimer. Interacts with PRKACA and PRKACB. PRKAR1A also interacts with RFC2; the complex may be involved in cell survival. Interacts with AKAP4. Interacts with RARA; the interaction occurs in the presence of cAMP or FSH and regulates RARA transcriptional activity. Interacts with the phosphorylated form of PJA2. Interacts with CBFA2T3. Interacts with PRKX; regulates this cAMP-dependent protein kinase. Interacts with smAKAP; this interaction may target PRKAR1A to the plasma membrane. Interacts with AICDA. In terms of processing, the pseudophosphorylation site binds to the substrate-binding region of the catalytic chain, resulting in the inhibition of its activity.

The protein resides in the cell membrane. Its function is as follows. Regulatory subunit of the cAMP-dependent protein kinases involved in cAMP signaling in cells. This chain is cAMP-dependent protein kinase type I-alpha regulatory subunit, found in Mesocricetus auratus (Golden hamster).